The primary structure comprises 266 residues: Maltodextrose utilization protein MalA (266 aa).

In terms of biological role, has a role in maltotetraose utilization. This chain is Maltodextrose utilization protein MalA (malA), found in Streptococcus pneumoniae (strain ATCC BAA-255 / R6).